A 342-amino-acid polypeptide reads, in one-letter code: tRNA-specific 2-thiouridylase MnmA (342 aa).

ATP is bound by residues leucine 6–serine 13 and leucine 32. The active-site Nucleophile is cysteine 92. Cysteines 92 and 191 form a disulfide. Glycine 116 contributes to the ATP binding site. Residues lysine 138–glutamine 140 form an interaction with tRNA region. The active-site Cysteine persulfide intermediate is the cysteine 191. Residues arginine 293 to tyrosine 294 are interaction with tRNA.

This sequence belongs to the MnmA/TRMU family.

Its subcellular location is the cytoplasm. The catalysed reaction is S-sulfanyl-L-cysteinyl-[protein] + uridine(34) in tRNA + AH2 + ATP = 2-thiouridine(34) in tRNA + L-cysteinyl-[protein] + A + AMP + diphosphate + H(+). In terms of biological role, catalyzes the 2-thiolation of uridine at the wobble position (U34) of tRNA, leading to the formation of s(2)U34. The protein is tRNA-specific 2-thiouridylase MnmA of Helicobacter pylori (strain ATCC 700392 / 26695) (Campylobacter pylori).